The following is a 552-amino-acid chain: Threonylcarbamoyladenosine tRNA methylthiotransferase (552 aa).

The interval 31 to 61 is disordered; the sequence is YENKKTVTVRAKKRSQIRLESQEEEEKPKPT. The MTTase N-terminal domain maps to 71–178; it reads QKVFVKTWGC…VVEVVEETLK (108 aa). Residues C80, C115, C144, C221, C225, and C228 each coordinate [4Fe-4S] cluster. The Radical SAM core domain occupies 207 to 438; it reads RKNPLIEIIS…DLFYSYEPYA (232 aa). Residues 438–500 form the TRAM domain; that stretch reads ADRVGEIYTV…KFSMVGEILD (63 aa). The chain crosses the membrane as a helical span at residues 532 to 552; that stretch reads FGIALVLGSLAFLIQLVVRLL.

It belongs to the methylthiotransferase family. CDKAL1 subfamily. [4Fe-4S] cluster serves as cofactor.

It localises to the membrane. It carries out the reaction N(6)-L-threonylcarbamoyladenosine(37) in tRNA + (sulfur carrier)-SH + AH2 + 2 S-adenosyl-L-methionine = 2-methylsulfanyl-N(6)-L-threonylcarbamoyladenosine(37) in tRNA + (sulfur carrier)-H + 5'-deoxyadenosine + L-methionine + A + S-adenosyl-L-homocysteine + 2 H(+). Functionally, catalyzes the methylthiolation of N6-threonylcarbamoyladenosine (t(6)A), leading to the formation of 2-methylthio-N6-threonylcarbamoyladenosine (ms(2)t(6)A) at position 37 in tRNAs that read codons beginning with adenine. The chain is Threonylcarbamoyladenosine tRNA methylthiotransferase from Drosophila melanogaster (Fruit fly).